Consider the following 523-residue polypeptide: Siroheme synthase (523 aa).

The tract at residues 1–203 is precorrin-2 dehydrogenase /sirohydrochlorin ferrochelatase; the sequence is MNTFPLFFKL…GNENEAIAQL (203 aa). Residues 22–23 and 43–44 each bind NAD(+); these read DV and PS. Position 128 is a phosphoserine (Ser128). The uroporphyrinogen-III C-methyltransferase stretch occupies residues 231-523; that stretch reads GEVYIVGAGP…DGGLEQLVID (293 aa). Pro240 contacts S-adenosyl-L-methionine. Catalysis depends on Asp263, which acts as the Proton acceptor. The active-site Proton donor is the Lys285. S-adenosyl-L-methionine-binding positions include 316–318, Ile321, 346–347, Met398, and Ala427; these read GGD and TA.

The protein in the N-terminal section; belongs to the precorrin-2 dehydrogenase / sirohydrochlorin ferrochelatase family. In the C-terminal section; belongs to the precorrin methyltransferase family.

The enzyme catalyses uroporphyrinogen III + 2 S-adenosyl-L-methionine = precorrin-2 + 2 S-adenosyl-L-homocysteine + H(+). It carries out the reaction precorrin-2 + NAD(+) = sirohydrochlorin + NADH + 2 H(+). The catalysed reaction is siroheme + 2 H(+) = sirohydrochlorin + Fe(2+). The protein operates within cofactor biosynthesis; adenosylcobalamin biosynthesis; precorrin-2 from uroporphyrinogen III: step 1/1. Its pathway is cofactor biosynthesis; adenosylcobalamin biosynthesis; sirohydrochlorin from precorrin-2: step 1/1. It participates in porphyrin-containing compound metabolism; siroheme biosynthesis; precorrin-2 from uroporphyrinogen III: step 1/1. It functions in the pathway porphyrin-containing compound metabolism; siroheme biosynthesis; siroheme from sirohydrochlorin: step 1/1. The protein operates within porphyrin-containing compound metabolism; siroheme biosynthesis; sirohydrochlorin from precorrin-2: step 1/1. Multifunctional enzyme that catalyzes the SAM-dependent methylations of uroporphyrinogen III at position C-2 and C-7 to form precorrin-2 via precorrin-1. Then it catalyzes the NAD-dependent ring dehydrogenation of precorrin-2 to yield sirohydrochlorin. Finally, it catalyzes the ferrochelation of sirohydrochlorin to yield siroheme. This is Siroheme synthase from Psychrobacter cryohalolentis (strain ATCC BAA-1226 / DSM 17306 / VKM B-2378 / K5).